The sequence spans 518 residues: 3-octaprenyl-4-hydroxybenzoate carboxy-lyase (518 aa).

Asn-177 serves as a coordination point for Mn(2+). Prenylated FMN is bound by residues 180–182 (IYR), 194–196 (RWL), and 199–200 (RG). Glu-243 is a Mn(2+) binding site. Asp-318 (proton donor) is an active-site residue.

Belongs to the UbiD family. In terms of assembly, homohexamer. It depends on prenylated FMN as a cofactor. The cofactor is Mn(2+).

It localises to the cell membrane. The enzyme catalyses a 4-hydroxy-3-(all-trans-polyprenyl)benzoate + H(+) = a 2-(all-trans-polyprenyl)phenol + CO2. It functions in the pathway cofactor biosynthesis; ubiquinone biosynthesis. In terms of biological role, catalyzes the decarboxylation of 3-octaprenyl-4-hydroxy benzoate to 2-octaprenylphenol, an intermediate step in ubiquinone biosynthesis. The protein is 3-octaprenyl-4-hydroxybenzoate carboxy-lyase of Burkholderia multivorans (strain ATCC 17616 / 249).